A 247-amino-acid polypeptide reads, in one-letter code: Carboxy-S-adenosyl-L-methionine synthase (247 aa).

S-adenosyl-L-methionine-binding positions include Tyr39, 64–66 (GCS), 89–90 (DN), 117–118 (DI), Asn132, and Arg199.

The protein belongs to the class I-like SAM-binding methyltransferase superfamily. Cx-SAM synthase family. Homodimer.

It catalyses the reaction prephenate + S-adenosyl-L-methionine = carboxy-S-adenosyl-L-methionine + 3-phenylpyruvate + H2O. Functionally, catalyzes the conversion of S-adenosyl-L-methionine (SAM) to carboxy-S-adenosyl-L-methionine (Cx-SAM). This Escherichia coli (strain K12 / MC4100 / BW2952) protein is Carboxy-S-adenosyl-L-methionine synthase.